Consider the following 280-residue polypeptide: Fe-S cluster assembly protein DRE2 (280 aa).

An N-terminal SAM-like domain region spans residues 1 to 121; it reads MSNLLVFDNS…TTLLKKSGGG (121 aa). The segment at 122–176 is linker; it reads PKKFAFKRASPATAAPSTNGTNPAATVNLNSVVTLSMDDDDLMDEDDLMEDDTNL. Residues cysteine 186, cysteine 198, cysteine 201, and cysteine 203 each coordinate [2Fe-2S] cluster. Positions 186 to 203 are fe-S binding site A; that stretch reads CDPGPGKKRRKACKDCTC. [4Fe-4S] cluster is bound by residues cysteine 244, cysteine 247, cysteine 255, and cysteine 258. 2 consecutive short sequence motifs (cx2C motif) follow at residues 244 to 247 and 255 to 258; these read CGSC and CDGC. The interval 244–258 is fe-S binding site B; it reads CGSCALGDAFRCDGC.

This sequence belongs to the anamorsin family. In terms of assembly, monomer. Interacts with TAH18. Interacts with MIA40. [2Fe-2S] cluster is required as a cofactor. The cofactor is [4Fe-4S] cluster.

The protein localises to the cytoplasm. It localises to the mitochondrion intermembrane space. Its function is as follows. Component of the cytosolic iron-sulfur (Fe-S) protein assembly (CIA) machinery required for the maturation of extramitochondrial Fe-S proteins. Part of an electron transfer chain functioning in an early step of cytosolic Fe-S biogenesis, facilitating the de novo assembly of a [4Fe-4S] cluster on the scaffold complex CFD1-NBP35. Electrons are transferred to DRE2 from NADPH via the FAD- and FMN-containing protein TAH18. TAH18-DRE2 are also required for the assembly of the diferric tyrosyl radical cofactor of ribonucleotide reductase (RNR), probably by providing electrons for reduction during radical cofactor maturation in the catalytic small subunit RNR2. In Yarrowia lipolytica (strain CLIB 122 / E 150) (Yeast), this protein is Fe-S cluster assembly protein DRE2.